We begin with the raw amino-acid sequence, 514 residues long: 2,3-bisphosphoglycerate-independent phosphoglycerate mutase (514 aa).

Mn(2+)-binding residues include Asp14 and Ser64. The active-site Phosphoserine intermediate is Ser64. Substrate contacts are provided by residues His125, 155 to 156, Arg187, Arg193, 263 to 266, and Lys336; these read RD and RADR. Mn(2+)-binding residues include Asp403, His407, Asp444, His445, and His463.

This sequence belongs to the BPG-independent phosphoglycerate mutase family. In terms of assembly, monomer. It depends on Mn(2+) as a cofactor.

It carries out the reaction (2R)-2-phosphoglycerate = (2R)-3-phosphoglycerate. Its pathway is carbohydrate degradation; glycolysis; pyruvate from D-glyceraldehyde 3-phosphate: step 3/5. Catalyzes the interconversion of 2-phosphoglycerate and 3-phosphoglycerate. This Shigella dysenteriae serotype 1 (strain Sd197) protein is 2,3-bisphosphoglycerate-independent phosphoglycerate mutase.